A 142-amino-acid polypeptide reads, in one-letter code: Transcription antitermination protein NusB (142 aa).

It belongs to the NusB family.

In terms of biological role, involved in transcription antitermination. Required for transcription of ribosomal RNA (rRNA) genes. Binds specifically to the boxA antiterminator sequence of the ribosomal RNA (rrn) operons. The polypeptide is Transcription antitermination protein NusB (Roseiflexus castenholzii (strain DSM 13941 / HLO8)).